A 233-amino-acid chain; its full sequence is uncharacterized protein (233 aa).

Positions 1-23 (MEIKYFLVLLVGFLLVLPSIVNP) are cleaved as a signal peptide. The tract at residues 42–217 (LDVNNPHNPN…HHHHQEASEC (176 aa)) is disordered. Positions 45-64 (NNPHNPNNNPHNPHNPNNNP) are enriched in low complexity. Residues 65-211 (HHPHHLHHHH…HPHPHHHHHH (147 aa)) are compositionally biased toward basic residues.

It localises to the secreted. This is an uncharacterized protein from Dictyostelium discoideum (Social amoeba).